Here is a 512-residue protein sequence, read N- to C-terminus: Acid-sensing ion channel 2 (512 aa).

Topologically, residues 1–37 (MDLKESPSEGSLQPSSIQIFANTSTLHGIRHIFVYGP) are cytoplasmic. Residues S8 and S11 each carry the phosphoserine modification. A helical membrane pass occupies residues 38-58 (LTIRRVLWAVAFVGSLGLLLV). Topologically, residues 59–427 (ESSERVSYYF…EQKKAYEVAA (369 aa)) are extracellular. 6 disulfides stabilise this stretch: C92–C193, C289–C364, C307–C360, C311–C358, C320–C342, and C322–C334. Residues N365 and N392 are each glycosylated (N-linked (GlcNAc...) asparagine). A helical membrane pass occupies residues 428 to 448 (LLGDIGGQMGLFIGASILTIL). Residues 441–443 (GAS) carry the GAS motif; ion selectivity filter motif. At 449–512 (ELFDYIYELI…ALGTLEEIAC (64 aa)) the chain is on the cytoplasmic side.

This sequence belongs to the amiloride-sensitive sodium channel (TC 1.A.6) family. ASIC2 subfamily. Can form homotrimers. Heterotrimer; forms functional heterotrimers producing channel with different properties. Forms heterotrimers with ASIC1; while ASIC1 determines current amplitude, ASIC2 influences the properties of the current. Forms heterotrimers with ASIC3; resulting in channels with distinct properties. Interacts with STOM; STOM regulates the gating of ASIC2-containing channels. Interacts with PICK1; promotes ASIC3 phosphorylation by PKC and activation of ASIC2/ASIC3 heterotrimers. As to expression, expressed by sensory neurons. Expressed by nociceptive sensory neurons, spiral ganglion (SG) neurons and the retina (at protein level). Expressed in outer nuclear layer of retina (photoreceptors) and to a lower extent in distal and proximal inner nuclear layer.

The protein resides in the cell membrane. It carries out the reaction Na(+)(in) = Na(+)(out). The enzyme catalyses K(+)(in) = K(+)(out). The catalysed reaction is Li(+)(in) = Li(+)(out). Inhibited by the diuretic drug amiloride. In terms of biological role, forms pH-gated trimeric sodium channels that act as postsynaptic excitatory sensors in the nervous system. Upon extracellular acidification, these channels generate rapid, transient inward currents that fully desensitize. Highly selective for sodium, they are permeable to other cations. By forming heterotrimeric channels with ASIC1, could contribute to synaptic plasticity, learning, and memory. Additionally, as acid sensors at nerve terminals, plays a role in mechanosensation and phototransduction. Has no pH-gated sodium channel activity per se but can associate with other ASICs to produce functional channels with specific properties. In Mus musculus (Mouse), this protein is Acid-sensing ion channel 2.